A 541-amino-acid polypeptide reads, in one-letter code: uncharacterized protein (541 aa).

Its subcellular location is the virion. This is an uncharacterized protein from Acanthamoeba polyphaga mimivirus (APMV).